Consider the following 85-residue polypeptide: Protein C4 (85 aa).

Glycine 2 carries N-myristoyl glycine; by host lipidation. Positions 42–65 (LNPAPTSTPTSTRTETLSNGENSR) are disordered. Residues 44 to 59 (PAPTSTPTSTRTETLS) are compositionally biased toward low complexity.

It belongs to the geminiviridae protein AC4/C4 family.

It is found in the host cell membrane. Functionally, pathogenicity determinant. May act as a suppressor of RNA-mediated gene silencing, also known as post-transcriptional gene silencing (PTGS), a mechanism of plant viral defense that limits the accumulation of viral RNAs. In Solanum lycopersicum (Tomato), this protein is Protein C4.